A 334-amino-acid polypeptide reads, in one-letter code: Ribosomal lysine N-methyltransferase 5 (334 aa).

S-adenosyl-L-methionine contacts are provided by residues Trp-88, 155 to 157 (GAG), Asp-177, Trp-227, and Met-254.

Belongs to the class I-like SAM-binding methyltransferase superfamily. RKM5 family.

Its function is as follows. S-adenosyl-L-methionine-dependent protein-lysine N-methyltransferase that methylates 60S ribosomal protein L1. The protein is Ribosomal lysine N-methyltransferase 5 (RKM5) of Lachancea thermotolerans (strain ATCC 56472 / CBS 6340 / NRRL Y-8284) (Yeast).